The primary structure comprises 282 residues: NADPH-dependent 7-cyano-7-deazaguanine reductase (282 aa).

88 to 90 (IES) is a substrate binding site. 90–91 (SK) contacts NADPH. Catalysis depends on Cys-190, which acts as the Thioimide intermediate. The Proton donor role is filled by Asp-197. 229–230 (HE) serves as a coordination point for substrate. 258-259 (RG) serves as a coordination point for NADPH.

Belongs to the GTP cyclohydrolase I family. QueF type 2 subfamily. Homodimer.

It is found in the cytoplasm. The catalysed reaction is 7-aminomethyl-7-carbaguanine + 2 NADP(+) = 7-cyano-7-deazaguanine + 2 NADPH + 3 H(+). Its pathway is tRNA modification; tRNA-queuosine biosynthesis. In terms of biological role, catalyzes the NADPH-dependent reduction of 7-cyano-7-deazaguanine (preQ0) to 7-aminomethyl-7-deazaguanine (preQ1). The polypeptide is NADPH-dependent 7-cyano-7-deazaguanine reductase (Escherichia coli O157:H7).